We begin with the raw amino-acid sequence, 115 residues long: DQKGKSPESECNKISEEPKCNEDKICSWHKEVKAGEKHCKFNSTKAKEKGVAVTQTQTAGGTEATTDKCKGKLEDTCKKESNCKWEGETCKDSSILVNKQLALSVVSAAFAALLF.

N-linked (GlcNAc...) asparagine glycosylation occurs at asparagine 42. A lipid anchor (GPI-anchor amidated aspartate) is attached at aspartate 92. The propeptide at 93–115 (SSILVNKQLALSVVSAAFAALLF) is removed in mature form.

Its subcellular location is the cell membrane. In terms of biological role, VSG forms a coat on the surface of the parasite. The trypanosome evades the immune response of the host by expressing a series of antigenically distinct VSGs from an estimated 1000 VSG genes. The chain is Variant surface glycoprotein ANTAT 1.8 from Trypanosoma brucei brucei.